Reading from the N-terminus, the 250-residue chain is Probable aquaporin TIP-type RB7-5A (250 aa).

Helical transmembrane passes span 20 to 42 and 55 to 77; these read AYVA…AIAY and GLVA…AANI. The NPA 1 motif lies at 83–85; sequence NPA. 3 consecutive transmembrane segments (helical) span residues 97–119, 140–162, and 172–194; these read TILT…CLLL, LQGV…ATAA, and IAPI…FSGG. Residues 197-199 carry the NPA 2 motif; that stretch reads NPA. Residues 215 to 237 traverse the membrane as a helical segment; it reads WIYWAGPLIGGGLAGFIYGDVFI.

It belongs to the MIP/aquaporin (TC 1.A.8) family. TIP (TC 1.A.8.10) subfamily. Roots.

The protein resides in the vacuole membrane. Channel protein in tonoplast. These proteins may allow the diffusion of amino acids and/or peptides from the vacuolar compartment to the cytoplasm. In Nicotiana tabacum (Common tobacco), this protein is Probable aquaporin TIP-type RB7-5A.